The following is a 704-amino-acid chain: MANENHGSPREEASLLSHSPGTSNQSQPCSPKPIRLVQDLPEELVHAGWEKCWSRRENRPYYFNRFTNQSLWEMPVLGQHDVISDPLGLNATPLPQDSSLVETPPAENKPRKRQLSEEQPSGNGVKKPKIEIPVTPTGQSVPSSPSIPGTPTLKMWGTSPEDKQQAALLRPTEVYWDLDIQTNAVIKHRGPSEVLPPHPEVELLRSQLILKLRQHYRELCQQREGIEPPRESFNRWMLERKVVDKGSDPLLPSNCEPVVSPSMFREIMNDIPIRLSRIKFREEAKRLLFKYAEAARRLIESRSASPDSRKVVKWNVEDTFSWLRKDHSASKEDYMDRLEHLRRQCGPHVSAAAKDSVEGICSKIYHISLEYVKRIREKHLAILKENNISEEVEAPEVEPRLVYCYPVRLAVSAPPMPSVEMHMENNVVCIRYKGEMVKVSRNYFSKLWLLYRYSCIDDSAFERFLPRVWCLLRRYQMMFGVGLYEGTGLQGSLPVHVFEALHRLFGVSFECFASPLNCYFRQYCSAFPDTDGYFGSRGPCLDFAPLSGSFEANPPFCEELMDAMVSHFERLLESSPEPLSFIVFIPEWREPPTPALTRMEQSRFKRHQLILPAFEHEYRSGSQHICKKEEMHYKAVHNTAVLFLQNDPGFAKWAPTPERLQELSAAYRQSGRSHSSGSSSSSSSEAKDRDSGREQGPSREPHPT.

The tract at residues 1-33 is disordered; sequence MANENHGSPREEASLLSHSPGTSNQSQPCSPKP. The segment covering 16–29 has biased composition (polar residues); that stretch reads LSHSPGTSNQSQPC. S30 bears the Phosphoserine mark. The region spanning 43–77 is the WW domain; sequence ELVHAGWEKCWSRRENRPYYFNRFTNQSLWEMPVL. The segment at 88–151 is disordered; the sequence is GLNATPLPQD…PSSPSIPGTP (64 aa). The Nuclear localization signal motif lies at 109–113; that stretch reads KPRKR. The residue at position 116 (S116) is a Phosphoserine. Residues 136 to 149 show a composition bias toward polar residues; it reads PTGQSVPSSPSIPG. T152 is modified (phosphothreonine). Residues R235 and R265 each contribute to the substrate site. 553-556 serves as a coordination point for S-adenosyl-L-methionine; it reads NPPF. Substrate-binding positions include E558 and 588–592; that span reads WREPP. 614–616 lines the S-adenosyl-L-methionine pocket; that stretch reads FEH. The tract at residues 663 to 704 is disordered; the sequence is LSAAYRQSGRSHSSGSSSSSSSEAKDRDSGREQGPSREPHPT. A Nuclear localization signal motif is present at residues 669 to 684; the sequence is QSGRSHSSGSSSSSSS. Over residues 670–684 the composition is skewed to low complexity; the sequence is SGRSHSSGSSSSSSS. Over residues 685 to 704 the composition is skewed to basic and acidic residues; sequence EAKDRDSGREQGPSREPHPT.

It belongs to the CAPAM family. In terms of assembly, interacts with POLR2A; interacts with the phosphorylated C-terminal domain (CTD) of POLR2A. As to expression, ubiquitous.

It localises to the nucleus. The enzyme catalyses a 5'-end (N(7)-methyl 5'-triphosphoguanosine)-(2'-O-methyladenosine) in mRNA + S-adenosyl-L-methionine = a 5'-end (N(7)-methyl 5'-triphosphoguanosine)-(N(6),2'-O-dimethyladenosine) in mRNA + S-adenosyl-L-homocysteine + H(+). Cap-specific adenosine methyltransferase activity is inhibited by zinc. Cap-specific adenosine methyltransferase that catalyzes formation of N(6),2'-O-dimethyladenosine cap (m6A(m)) by methylating the adenosine at the second transcribed position of capped mRNAs. Recruited to the early elongation complex of RNA polymerase II (RNAPII) via interaction with POLR2A and mediates formation of m6A(m) co-transcriptionally. The chain is mRNA (2'-O-methyladenosine-N(6)-)-methyltransferase from Homo sapiens (Human).